The chain runs to 499 residues: MELDAILDNLSDEEQIELLELLEEEENYRNTHLLYEFAPYSKQREFIDAGHDYPERCFMAGNQLGKSFTGAAEVAFHLTGRYPGTKGYPADGKYGGEWKGKRFYEPVVFWIGGETNETVTKTTQRILCGRIEENDEPGYGSIPKEDIISWKKSPFFPNLVDHLLVKHHTADGVEDGISICYFKPYSQGRARWQGDTIHGVWFDEEPPYSIYGEGLTRTNKYGQFSILTFTPLMGMSDVVTKFLKNPSKSQKVVNMTIYDAEHYTDEQKEQIIASYPEHEREARARGIPTMGSGRIFQIPEETIKCQPFECPDHFYVIDAQDFGWNHPQAHIQLWWDKDADVFYLARVWKKSENTAVQAWGAVKSWANKIPVAWPHDGHQHEKGGGEQLKTQYADAGFSMLPDHATFPDGGNSVESGISELRDLMLEGRFKVFNTCEPFFEEFRLYHRDENGKIVKTNDDVLDATRYGYMMRRFARMMRDIRKPKEKKIPAPIRPVRRGR.

The interaction with the terminase small subunit stretch occupies residues 1 to 58 (MELDAILDNLSDEEQIELLELLEEEENYRNTHLLYEFAPYSKQREFIDAGHDYPERCF). The segment at 1-286 (MELDAILDNL…EHEREARARG (286 aa)) is ATPase activity. Residues 60–67 (AGNQLGKS) carry the Walker A motif motif. The Walker B motif motif lies at 199–204 (GVWFDE). The active-site For ATPase activity is the Glu-204. A nuclease activity region spans residues 312-482 (DHFYVIDAQD…FARMMRDIRK (171 aa)). The Mg(2+) site is built by Asp-321 and Asp-459.

Belongs to the Lederbergvirus large terminase family. As to quaternary structure, interacts with the terminase small subunit; the active complex is composed of dimer of terminase large subunits and a nonamer ring of terminase small subunits. Interacts with the portal protein; this interaction allows the packaging of viral DNA. Mg(2+) is required as a cofactor.

The terminase large subunit acts as an ATP driven molecular motor necessary for viral DNA translocation into empty capsids and as an endonuclease that cuts the viral genome to initiate and to end a packaging reaction. The terminase lies at a unique vertex of the procapsid and is composed of two subunits, a small terminase subunit involved in viral DNA recognition (packaging 'pac' sequence), and a large terminase subunit possessing endonucleolytic and ATPase activities. Both terminase subunits heterooligomerize and are docked on the portal protein to form the packaging machine. Once the capsid is packaged with the DNA (headful packaging), the terminase cleaves the viral genome concatemer and is substituted by the tail. This Salmonella phage P22 (Bacteriophage P22) protein is Terminase, large subunit (2).